Reading from the N-terminus, the 533-residue chain is CTP synthase (533 aa).

Residues 1–265 (MTKFIFVTGG…ARYLVRRLGL (265 aa)) form an amidoligase domain region. Position 13 (Ser13) interacts with CTP. Residue Ser13 coordinates UTP. Residue 14–19 (GLGKGI) coordinates ATP. An L-glutamine-binding site is contributed by Tyr54. Asp71 provides a ligand contact to ATP. Residues Asp71 and Glu139 each coordinate Mg(2+). Residues 146–148 (DIE), 186–191 (KTKPTQ), and Lys222 each bind CTP. Residues 186 to 191 (KTKPTQ) and Lys222 contribute to the UTP site. Residues 290–532 (EIAIVGKYVK…VRAARERKYG (243 aa)) form the Glutamine amidotransferase type-1 domain. Residue Gly351 coordinates L-glutamine. Residue Cys378 is the Nucleophile; for glutamine hydrolysis of the active site. Residues 379-382 (FGFQ), Glu402, and Arg459 contribute to the L-glutamine site. Catalysis depends on residues His505 and Glu507.

It belongs to the CTP synthase family. Homotetramer.

It catalyses the reaction UTP + L-glutamine + ATP + H2O = CTP + L-glutamate + ADP + phosphate + 2 H(+). The catalysed reaction is L-glutamine + H2O = L-glutamate + NH4(+). The enzyme catalyses UTP + NH4(+) + ATP = CTP + ADP + phosphate + 2 H(+). The protein operates within pyrimidine metabolism; CTP biosynthesis via de novo pathway; CTP from UDP: step 2/2. Allosterically activated by GTP, when glutamine is the substrate; GTP has no effect on the reaction when ammonia is the substrate. The allosteric effector GTP functions by stabilizing the protein conformation that binds the tetrahedral intermediate(s) formed during glutamine hydrolysis. Inhibited by the product CTP, via allosteric rather than competitive inhibition. Its function is as follows. Catalyzes the ATP-dependent amination of UTP to CTP with either L-glutamine or ammonia as the source of nitrogen. Regulates intracellular CTP levels through interactions with the four ribonucleotide triphosphates. This chain is CTP synthase, found in Thermococcus gammatolerans (strain DSM 15229 / JCM 11827 / EJ3).